The following is a 204-amino-acid chain: Thioredoxin-like 4, chloroplastic (204 aa).

The transit peptide at 1-27 (MSSLLNISHCSYHGYSGLTSRGGINTV) directs the protein to the chloroplast. The Thioredoxin domain occupies 63–201 (AKSLSQENLV…IDAAILKYTS (139 aa)). Residues Cys119 and Cys122 each act as nucleophile in the active site. Cys119 and Cys122 are joined by a disulfide.

Belongs to the thioredoxin family.

Its subcellular location is the plastid. The protein resides in the chloroplast. Functionally, probable thiol-disulfide oxidoreductase that may participate in various redox reactions. The sequence is that of Thioredoxin-like 4, chloroplastic from Arabidopsis thaliana (Mouse-ear cress).